An 89-amino-acid chain; its full sequence is Small ribosomal subunit protein uS14 (89 aa).

This sequence belongs to the universal ribosomal protein uS14 family. In terms of assembly, part of the 30S ribosomal subunit. Contacts proteins S3 and S10.

Binds 16S rRNA, required for the assembly of 30S particles and may also be responsible for determining the conformation of the 16S rRNA at the A site. This chain is Small ribosomal subunit protein uS14, found in Chlorobaculum tepidum (strain ATCC 49652 / DSM 12025 / NBRC 103806 / TLS) (Chlorobium tepidum).